Reading from the N-terminus, the 1562-residue chain is Cell surface antigen I/II (1562 aa).

Positions 1–38 (MKVKKTYGFRKSKISKTLCGAVLGTVAAVSVAGQKVFA) are cleaved as a signal peptide. Positions 42–54 (TTTSDVDTKVVGT) are enriched in low complexity. The segment at 42-91 (TTTSDVDTKVVGTQTGNPATNLPEAQGSASKEAEQSQNQAGETNGSIPVE) is disordered. A helical region spans residues 60-551 (ATNLPEAQGS…SKAKYDQKIL (492 aa)). A compositionally biased stretch (polar residues) spans 76–87 (QSQNQAGETNGS). 4 Ag I/II A repeats span residues 147–221 (KKTT…QKTN), 222–303 (AANQ…QEAN), 304–385 (AANE…KKAN), and 386–467 (AANE…QKDL). 2 disordered regions span residues 824–973 (VPKV…PTDP) and 1482–1509 (SNTV…RTST). Over residues 943-958 (PTPPTPTPDQPEPNKP) the composition is skewed to pro residues. Over residues 1500-1509 (QDPSSPRTST) the composition is skewed to low complexity. The short motif at 1529-1533 (LPNTG) is the LPXTG sorting signal element. The residue at position 1532 (T1532) is a Pentaglycyl murein peptidoglycan amidated threonine. A propeptide spans 1533–1562 (GVTNNAYMPLLGIIGLVTSFSLLGLKAKKD) (removed by sortase).

This sequence belongs to the antigen I/II family. Detected as a 185 kDa cell surface protein, but also as 2 proteins in S.mutans culture supernatants of about 150 kDa (antigen I) and 50 kDa (antigen II); antigen II is only seen after proteolysis. Antigen I and II have the same N-terminus but different C-termini.

It localises to the secreted. The protein localises to the cell wall. Functionally, surface protein antigen implicated in dental caries. This Streptococcus mutans serotype c (strain ATCC 700610 / UA159) protein is Cell surface antigen I/II.